A 651-amino-acid polypeptide reads, in one-letter code: Acetyl-coenzyme A synthetase (651 aa).

CoA-binding positions include 189 to 192, T311, and N335; that span reads RGGK. Residues 387–389, 411–416, D500, and R515 each bind ATP; these read GEP and DTWWQT. S523 is a CoA binding site. An ATP-binding site is contributed by R526. Positions 537, 539, and 542 each coordinate Mg(2+). R584 contributes to the CoA binding site. An N6-acetyllysine modification is found at K609.

The protein belongs to the ATP-dependent AMP-binding enzyme family. The cofactor is Mg(2+). Post-translationally, acetylated. Deacetylation by the SIR2-homolog deacetylase activates the enzyme.

It catalyses the reaction acetate + ATP + CoA = acetyl-CoA + AMP + diphosphate. Functionally, catalyzes the conversion of acetate into acetyl-CoA (AcCoA), an essential intermediate at the junction of anabolic and catabolic pathways. AcsA undergoes a two-step reaction. In the first half reaction, AcsA combines acetate with ATP to form acetyl-adenylate (AcAMP) intermediate. In the second half reaction, it can then transfer the acetyl group from AcAMP to the sulfhydryl group of CoA, forming the product AcCoA. This is Acetyl-coenzyme A synthetase from Allorhizobium ampelinum (strain ATCC BAA-846 / DSM 112012 / S4) (Agrobacterium vitis (strain S4)).